Consider the following 283-residue polypeptide: Pantoate--beta-alanine ligase (283 aa).

This sequence belongs to the pantothenate synthetase family.

It catalyses the reaction (R)-pantoate + beta-alanine + ATP = (R)-pantothenate + AMP + diphosphate + H(+). It participates in cofactor biosynthesis; (R)-pantothenate biosynthesis; (R)-pantothenate from (R)-pantoate and beta-alanine: step 1/1. The protein is Pantoate--beta-alanine ligase (pan6) of Schizosaccharomyces pombe (strain 972 / ATCC 24843) (Fission yeast).